The chain runs to 417 residues: Gamma-glutamyl phosphate reductase (417 aa).

It belongs to the gamma-glutamyl phosphate reductase family.

It is found in the cytoplasm. The enzyme catalyses L-glutamate 5-semialdehyde + phosphate + NADP(+) = L-glutamyl 5-phosphate + NADPH + H(+). Its pathway is amino-acid biosynthesis; L-proline biosynthesis; L-glutamate 5-semialdehyde from L-glutamate: step 2/2. Functionally, catalyzes the NADPH-dependent reduction of L-glutamate 5-phosphate into L-glutamate 5-semialdehyde and phosphate. The product spontaneously undergoes cyclization to form 1-pyrroline-5-carboxylate. The polypeptide is Gamma-glutamyl phosphate reductase (Escherichia coli (strain SMS-3-5 / SECEC)).